The chain runs to 300 residues: MRHDNDSWDITTSVGSTALFVAASRALEARKPDPLAVDPYAEVFCRAAGGDWAGLFDAGADPKPDHVLFSEFGEQFVNFQGARTRYFDAYFAAASDAGVRQVVLLAAGLDSRAYRLPWPDGTVVYELDQPRVLEFKREVLAERGEQPVAQRREVAVDLRDDWCAALTAAGFDPARPSAWLAEGLLMYLPATAQEALFSGIDALSAPRSWAAVEESVPMPAEVFAYKREEERAAGEEGTFFTLVYNERHAPAERWFGERGWAAEPTSLADYLTRVGRPAPVDDPEFGAMISAIRLVTATKG.

S-adenosyl-L-methionine-binding positions include Asp-128 and 157–158; that span reads DL.

This sequence belongs to the UPF0677 family.

Exhibits S-adenosyl-L-methionine-dependent methyltransferase activity. The protein is Putative S-adenosyl-L-methionine-dependent methyltransferase Mkms_0379 of Mycobacterium sp. (strain KMS).